The sequence spans 422 residues: UDP-N-acetylglucosamine 1-carboxyvinyltransferase (422 aa).

Lysine 22–asparagine 23 serves as a coordination point for phosphoenolpyruvate. Residue arginine 94 coordinates UDP-N-acetyl-alpha-D-glucosamine. Cysteine 118 acts as the Proton donor in catalysis. Position 118 is a 2-(S-cysteinyl)pyruvic acid O-phosphothioketal (cysteine 118). UDP-N-acetyl-alpha-D-glucosamine contacts are provided by residues arginine 123 to leucine 127, aspartate 309, and isoleucine 331.

It belongs to the EPSP synthase family. MurA subfamily.

Its subcellular location is the cytoplasm. The enzyme catalyses phosphoenolpyruvate + UDP-N-acetyl-alpha-D-glucosamine = UDP-N-acetyl-3-O-(1-carboxyvinyl)-alpha-D-glucosamine + phosphate. It participates in cell wall biogenesis; peptidoglycan biosynthesis. Its function is as follows. Cell wall formation. Adds enolpyruvyl to UDP-N-acetylglucosamine. In Cereibacter sphaeroides (strain KD131 / KCTC 12085) (Rhodobacter sphaeroides), this protein is UDP-N-acetylglucosamine 1-carboxyvinyltransferase.